The chain runs to 585 residues: PiggyBac transposable element-derived protein 4 (585 aa).

The disordered stretch occupies residues 1–73 (MSNPRKRSIP…STSSDSGRSM (73 aa)). Residues 25–40 (DSFDESDFSEIDDSDN) show a composition bias toward acidic residues. The span at 47–61 (EADKIRPLSHLESDG) shows a compositional bias: basic and acidic residues. Low complexity predominate over residues 62–72 (KSSTSSDSGRS).

The sequence is that of PiggyBac transposable element-derived protein 4 (PGBD4) from Homo sapiens (Human).